The chain runs to 297 residues: Acetyl-coenzyme A carboxylase carboxyl transferase subunit beta (297 aa).

A disordered region spans residues methionine 1 to proline 23. The region spanning valine 26–glutamate 295 is the CoA carboxyltransferase N-terminal domain. Cysteine 30, cysteine 33, cysteine 49, and cysteine 52 together coordinate Zn(2+). The C4-type zinc-finger motif lies at cysteine 30–cysteine 52.

It belongs to the AccD/PCCB family. As to quaternary structure, acetyl-CoA carboxylase is a heterohexamer composed of biotin carboxyl carrier protein (AccB), biotin carboxylase (AccC) and two subunits each of ACCase subunit alpha (AccA) and ACCase subunit beta (AccD). Zn(2+) is required as a cofactor.

Its subcellular location is the cytoplasm. It carries out the reaction N(6)-carboxybiotinyl-L-lysyl-[protein] + acetyl-CoA = N(6)-biotinyl-L-lysyl-[protein] + malonyl-CoA. It participates in lipid metabolism; malonyl-CoA biosynthesis; malonyl-CoA from acetyl-CoA: step 1/1. In terms of biological role, component of the acetyl coenzyme A carboxylase (ACC) complex. Biotin carboxylase (BC) catalyzes the carboxylation of biotin on its carrier protein (BCCP) and then the CO(2) group is transferred by the transcarboxylase to acetyl-CoA to form malonyl-CoA. The polypeptide is Acetyl-coenzyme A carboxylase carboxyl transferase subunit beta (Actinobacillus pleuropneumoniae serotype 5b (strain L20)).